A 240-amino-acid chain; its full sequence is Ribosomal RNA small subunit methyltransferase G (240 aa).

Residues G80, F85, 131–132 (AE), and R150 contribute to the S-adenosyl-L-methionine site.

Belongs to the methyltransferase superfamily. RNA methyltransferase RsmG family.

It is found in the cytoplasm. Its function is as follows. Specifically methylates the N7 position of a guanine in 16S rRNA. In Dictyoglomus thermophilum (strain ATCC 35947 / DSM 3960 / H-6-12), this protein is Ribosomal RNA small subunit methyltransferase G.